Consider the following 158-residue polypeptide: UPAR/Ly6 domain-containing protein crim (158 aa).

Positions 1 to 22 are cleaved as a signal peptide; that stretch reads MHYHTNLIAALLLAALIHEGSA. Residues 23 to 136 are Extracellular-facing; sequence IWCYRCTSAT…FCFLDHRCNG (114 aa). N107 carries N-linked (GlcNAc...) asparagine glycosylation. The GPI-anchor amidated asparagine moiety is linked to residue N135. Positions 136–158 are cleaved as a propeptide — removed in mature form; the sequence is GASGLQTSAVIGLLTLIPALLLR. A helical transmembrane segment spans residues 137–157; sequence ASGLQTSAVIGLLTLIPALLL. Position 158 (R158) is a topological domain, cytoplasmic.

Belongs to the quiver family.

The protein localises to the membrane. In terms of biological role, required for septate junction assembly possibly by organizing the preassembly and transport of septate junction proteins. Involved in epithelial cell septate junction-mediated paracellular barrier functions of trachea, hindgut and salivary gland. In Drosophila melanogaster (Fruit fly), this protein is UPAR/Ly6 domain-containing protein crim.